A 166-amino-acid chain; its full sequence is SsrA-binding protein (166 aa).

The protein belongs to the SmpB family.

The protein resides in the cytoplasm. Its function is as follows. Required for rescue of stalled ribosomes mediated by trans-translation. Binds to transfer-messenger RNA (tmRNA), required for stable association of tmRNA with ribosomes. tmRNA and SmpB together mimic tRNA shape, replacing the anticodon stem-loop with SmpB. tmRNA is encoded by the ssrA gene; the 2 termini fold to resemble tRNA(Ala) and it encodes a 'tag peptide', a short internal open reading frame. During trans-translation Ala-aminoacylated tmRNA acts like a tRNA, entering the A-site of stalled ribosomes, displacing the stalled mRNA. The ribosome then switches to translate the ORF on the tmRNA; the nascent peptide is terminated with the 'tag peptide' encoded by the tmRNA and targeted for degradation. The ribosome is freed to recommence translation, which seems to be the essential function of trans-translation. The sequence is that of SsrA-binding protein from Parasynechococcus marenigrum (strain WH8102).